The primary structure comprises 669 residues: PAN2-PAN3 deadenylation complex subunit PAN3 (669 aa).

The segment covering 1–10 has biased composition (polar residues); that stretch reads MATTFGSPSG. A disordered region spans residues 1–25; sequence MATTFGSPSGDSRRGVASPRPKGRE. The C3H1-type zinc-finger motif lies at 25 to 54; the sequence is EAKNTFCRNVTIYGHCRYENSKCRPPHLPD. Residues 247 to 519 are pseudokinase domain; that stretch reads QVMPNSTLPV…DIDNFLGGIS (273 aa). Residues arginine 298, 347–354, and 408–409 each bind ATP; these read DYHPNSKS and SK. Positions 520–558 form a coiled coil; sequence DQLASVFDSELHAQDTLTNTLGRELESSRIVRLLVKLNM. A knob domain region spans residues 559-669; that stretch reads VNERPELDAS…LIRAGRGQGK (111 aa).

This sequence belongs to the protein kinase superfamily. PAN3 family. As to quaternary structure, homodimer. Forms a heterotrimer with a catalytic subunit PAN2 to form the poly(A)-nuclease (PAN) deadenylation complex. Interacts (via PAM-2 motif) with poly(A)-binding protein PAB1 (via PABC domain), conferring substrate specificity of the enzyme complex.

The protein resides in the cytoplasm. Its function is as follows. Regulatory subunit of the poly(A)-nuclease (PAN) deadenylation complex, one of two cytoplasmic mRNA deadenylases involved in mRNA turnover. PAN specifically shortens poly(A) tails of RNA and the activity is stimulated by poly(A)-binding protein PAB1. PAN deadenylation is followed by rapid degradation of the shortened mRNA tails by the CCR4-NOT complex. Deadenylated mRNAs are then degraded by two alternative mechanisms, namely exosome-mediated 3'-5' exonucleolytic degradation, or deadenylation-dependent mRNA decaping and subsequent 5'-3' exonucleolytic degradation by XRN1. May also be involved in post-transcriptional maturation of mRNA poly(A) tails. PAN3 acts as a positive regulator for PAN activity, recruiting the catalytic subunit PAN2 to mRNA via its interaction with RNA and with PAB1. The polypeptide is PAN2-PAN3 deadenylation complex subunit PAN3 (Phaeosphaeria nodorum (strain SN15 / ATCC MYA-4574 / FGSC 10173) (Glume blotch fungus)).